The chain runs to 290 residues: Protease HtpX homolog (290 aa).

2 consecutive transmembrane segments (helical) span residues 5–27 and 32–51; these read MWLR…GYLF and VAFI…YWYS. H133 is a Zn(2+) binding site. E134 is a catalytic residue. H137 is a binding site for Zn(2+). Transmembrane regions (helical) follow at residues 143–163 and 182–202; these read ILIG…AYWA and IIGA…IQAA. Residue E208 coordinates Zn(2+).

This sequence belongs to the peptidase M48B family. It depends on Zn(2+) as a cofactor.

The protein localises to the cell membrane. This is Protease HtpX homolog from Thermococcus kodakarensis (strain ATCC BAA-918 / JCM 12380 / KOD1) (Pyrococcus kodakaraensis (strain KOD1)).